Here is a 906-residue protein sequence, read N- to C-terminus: Protein translocase subunit SecA (906 aa).

ATP-binding positions include Gln-86, 104–108 (GEGKT), and Asp-499. A disordered region spans residues 863–885 (PVVSRIDPKDRNPDDPTSWGRVS). Zn(2+)-binding residues include Cys-890, Cys-892, Cys-901, and His-902.

The protein belongs to the SecA family. Monomer and homodimer. Part of the essential Sec protein translocation apparatus which comprises SecA, SecYEG and auxiliary proteins SecDF-YajC and YidC. Zn(2+) serves as cofactor.

The protein localises to the cell inner membrane. It is found in the cytoplasm. It catalyses the reaction ATP + H2O + cellular proteinSide 1 = ADP + phosphate + cellular proteinSide 2.. Its function is as follows. Part of the Sec protein translocase complex. Interacts with the SecYEG preprotein conducting channel. Has a central role in coupling the hydrolysis of ATP to the transfer of proteins into and across the cell membrane, serving both as a receptor for the preprotein-SecB complex and as an ATP-driven molecular motor driving the stepwise translocation of polypeptide chains across the membrane. The chain is Protein translocase subunit SecA from Rickettsia akari (strain Hartford).